We begin with the raw amino-acid sequence, 389 residues long: MAAALLLALAFTLLSGQGACAAAGFLKAPLSQERWAGGSVVLHCEAVGSPIPEIQWWFEGNAPNDSCSQLWDGARLDRVHIHAAYRQHAASSLSVDGLTAEDTGTYECRASSDPDRNHLTRPPRVKWVRAQASVVVLEPGTIQTSVQEVNSKTQLTCSLNSSGVDIVGHRWMRGGKVLQEDTLPDLHTKYIVDADDRSGEYSCIFLPEPVGRSEINVEGPPRIKVGKKSEHSSEGELAKLVCKSDASYPPITDWFWFKTSDTGEEEAITNSTEANGKYVVVSTPEKSQLTISNLDVNVDPGTYVCNATNAQGTTRETISLRVRSRMAALWPFLGIVAEVLVLVTIIFIYEKRRKPDQTLDEDDPGAAPLKGSGTHMNDKDKNVRQRNAT.

The N-terminal stretch at Met-1 to Ala-21 is a signal peptide. Topologically, residues Ala-22–Arg-325 are extracellular. Residues Gly-37–Thr-120 enclose the Ig-like domain. Intrachain disulfides connect Cys-44-Cys-108, Cys-157-Cys-203, and Cys-242-Cys-305. In terms of domain architecture, Ig-like C2-type spans Glu-138–Gly-219. 3 N-linked (GlcNAc...) asparagine glycosylation sites follow: Asn-160, Asn-270, and Asn-306. The 99-residue stretch at Pro-221–Ser-319 folds into the Ig-like V-type domain. The chain crosses the membrane as a helical span at residues Met-326 to Tyr-349. The Cytoplasmic segment spans residues Glu-350 to Thr-389. A disordered region spans residues Asp-356 to Thr-389. Thr-358 is subject to Phosphothreonine. Position 372 is a phosphoserine (Ser-372).

As to quaternary structure, interacts with NXNL1. Interacts with SLC2A1 and SLC16A1/GLUT1. Interacts with XKR8; promoting its localization at the cell membrane. Interacts with ATP1B2, MAG and L1CAM. Interacts with SLC16A7. Interacts with VEGFA, KDR/VEGFR2, PPIA/CYPA, SLC1A3, SLC16A11 and SLC16A12. Interacts with PPIL2; regulates BSG transport to the cell membrane. Interacts with SLC16A1; interaction mediates SLC16A1 targeting to the plasma membrane. Interacts with SLC16A3; interaction mediates SLC16A3 targeting to the plasma membrane. In terms of assembly, interacts with SLC16A6; this interaction mediates targeting to the plasma membrane. N-glycosylated. In terms of processing, N-glycosylated. During spermatogenesis, probably deglycosylated during epididymal transit. Retina-specific. Expressed in both rods and cones (at protein level). In terms of tissue distribution, testis and caput, corpus and cauda epididymides (at protein level). Expressed in the brain, lung, liver, kidney, heart, spleen, uterus, retina and skeletal muscle.

It is found in the cell membrane. Its subcellular location is the photoreceptor inner segment. The protein resides in the cell projection. It localises to the cilium. The protein localises to the photoreceptor outer segment. It is found in the endoplasmic reticulum membrane. Its subcellular location is the basolateral cell membrane. Its function is as follows. Essential for normal retinal maturation and development. Acts as a retinal cell surface receptor for NXNL1 and plays an important role in NXNL1-mediated survival of retinal cone photoreceptors. In association with glucose transporter SLC16A1/GLUT1 and NXNL1, promotes retinal cone survival by enhancing aerobic glycolysis and accelerating the entry of glucose into photoreceptors. Signaling receptor for cyclophilins, essential for PPIA/CYPA and PPIB/CYPB-dependent signaling related to chemotaxis and adhesion of immune cells. Plays an important role in targeting the monocarboxylate transporters SLC16A1, SLC16A3 and SLC16A8 to the plasma membrane. Acts as a coreceptor for vascular endothelial growth factor receptor 2 (KDR/VEGFR2) in endothelial cells enhancing its VEGFA-mediated activation and downstream signaling. Promotes angiogenesis through EPAS1/HIF2A-mediated up-regulation of VEGFA and KDR/VEGFR2 in endothelial cells. Plays an important role in spermatogenesis; mediates interactions between germ cells and Sertoli cell and is essential for the development/differentiation of germ cells to round spermatids. The chain is Basigin (Bsg) from Mus musculus (Mouse).